Consider the following 136-residue polypeptide: Small nuclear ribonucleoprotein Sm D3 (136 aa).

Positions 6 to 78 (VPIKILHEAE…IRFMILPDML (73 aa)) constitute a Sm domain. Residues 98-136 (GLGGLDQRGRGRGTAFRRPMGRGGPRGMSRPGGAPTFRG) form a disordered region.

The protein belongs to the snRNP core protein family.

The protein resides in the nucleus. It localises to the cytoplasm. It is found in the cytosol. In terms of biological role, plays a role in pre-mRNA splicing as a core component of the spliceosomal U1, U2, U4 and U5 small nuclear ribonucleoproteins (snRNPs), the building blocks of the spliceosome. The sequence is that of Small nuclear ribonucleoprotein Sm D3 (snr-1) from Caenorhabditis elegans.